The chain runs to 184 residues: Large ribosomal subunit protein uL22 (184 aa).

The disordered stretch occupies residues 160–184 (PEEEVAQKKKISQKKLKKQKLMARE). Over residues 167-184 (KKKISQKKLKKQKLMARE) the composition is skewed to basic residues.

It belongs to the universal ribosomal protein uL22 family. As to quaternary structure, component of the large ribosomal subunit.

The protein localises to the cytoplasm. Component of the large ribosomal subunit. The ribosome is a large ribonucleoprotein complex responsible for the synthesis of proteins in the cell. The polypeptide is Large ribosomal subunit protein uL22 (RPL17) (Bos taurus (Bovine)).